Consider the following 235-residue polypeptide: Urease accessory protein UreF (235 aa).

It belongs to the UreF family. As to quaternary structure, ureD, UreF and UreG form a complex that acts as a GTP-hydrolysis-dependent molecular chaperone, activating the urease apoprotein by helping to assemble the nickel containing metallocenter of UreC. The UreE protein probably delivers the nickel.

It localises to the cytoplasm. Its function is as follows. Required for maturation of urease via the functional incorporation of the urease nickel metallocenter. This chain is Urease accessory protein UreF, found in Ureaplasma parvum serovar 3 (strain ATCC 27815 / 27 / NCTC 11736).